We begin with the raw amino-acid sequence, 175 residues long: uncharacterized protein (175 aa).

Residues 1 to 11 (METWRKGSFRN) constitute a mitochondrion transit peptide. The segment at 24–92 (RRLRRQSSVL…PRLYRESSSC (69 aa)) is disordered. Basic and acidic residues predominate over residues 41-63 (GDHEEYSNREVIRELQGRPDGRR).

The protein resides in the mitochondrion. This is an uncharacterized protein from Homo sapiens (Human).